A 244-amino-acid polypeptide reads, in one-letter code: U11/U12 small nuclear ribonucleoprotein 35 kDa protein (244 aa).

The region spanning Leu51–Glu129 is the RRM domain. Positions Gly146–Phe162 are enriched in basic and acidic residues. Positions Gly146–Lys244 are disordered. Residue Lys172 forms a Glycyl lysine isopeptide (Lys-Gly) (interchain with G-Cter in SUMO2) linkage. Composition is skewed to basic and acidic residues over residues Asn173–Glu185 and Arg192–Lys244.

In terms of assembly, component of the U11/U12 snRNPs that are part of the U12-type spliceosome.

The protein resides in the nucleus. The chain is U11/U12 small nuclear ribonucleoprotein 35 kDa protein (Snrnp35) from Mus musculus (Mouse).